A 359-amino-acid polypeptide reads, in one-letter code: Peroxisome assembly protein 12 (359 aa).

The Peroxisomal matrix segment spans residues 1 to 24; the sequence is MSTTIRASQLASSISPKTEEKQPS. A helical membrane pass occupies residues 25–52; sequence VFDIIAQENLATSIRPALQHLVKYLAFF. Residues 53-56 lie on the Cytoplasmic side of the membrane; that stretch reads KPKT. Residues 57–81 traverse the membrane as a helical segment; it reads FLSVHRNFDEYYIIFDLILQNHYLR. Topologically, residues 82–106 are peroxisomal matrix; that stretch reads NYGASFTENFYSMKRIASGTGNPPN. The chain crosses the membrane as a helical span at residues 107–128; it reads DGRERIMSLITLVGWPYVENKL. Residues 129 to 133 lie on the Cytoplasmic side of the membrane; sequence NQLYD. Residues 134-184 form a helical membrane-spanning segment; sequence RLKEVYECRSWSSINGMKAKCQKMFVIIWPYIKTALKAVKSALQLAYILNR. Residues 185-253 are Peroxisomal matrix-facing; the sequence is SSIHSPWLYF…ILGLPGIVSR (69 aa). The helical transmembrane segment at 254–281 threads the bilayer; the sequence is LFAYGLFFVQFLDYMYNTDLAKLTKTGL. Residues 282-359 lie on the Cytoplasmic side of the membrane; sequence DGAIPSPPHK…NVQHLIRLFV (78 aa). The Zn(2+) site is built by cysteine 307, cysteine 310, cysteine 328, and cysteine 331. Residues 307 to 346 form an RING-type; degenerate zinc finger; the sequence is CPICLKKRVNDTALFVSGYVFCYTCINQYVNTYNKCPVTG.

Belongs to the pex2/pex10/pex12 family. As to quaternary structure, component of the PEX2-PEX10-PEX12 retrotranslocation channel.

It is found in the peroxisome membrane. The protein operates within protein modification; protein ubiquitination. Component of a retrotranslocation channel required for peroxisome organization by mediating export of the PEX5/prx-5 receptor from peroxisomes to the cytosol, thereby promoting PEX5/prx-5 recycling. The retrotranslocation channel is composed of PEX2/prx-2, PEX10/prx-10 and PEX12/prx-12; each subunit contributing transmembrane segments that coassemble into an open channel that specifically allows the passage of PEX5/prx-5 through the peroxisomal membrane. PEX12/prx-12 also regulates PEX5/prx-5 recycling by activating the E3 ubiquitin-protein ligase activity of PEX10/prx-10. When PEX5 recycling is compromised, PEX12/prx-12 stimulates PEX10-mediated polyubiquitination of PEX5/prx-5, leading to its subsequent degradation. The sequence is that of Peroxisome assembly protein 12 (prx-12) from Caenorhabditis elegans.